Here is a 621-residue protein sequence, read N- to C-terminus: KIF-binding protein (621 aa).

Serine 178 carries the post-translational modification Phosphoserine.

This sequence belongs to the KIF-binding protein family. In terms of assembly, interacts with KIF1B; positively regulates KIF1B microtubule motor activity. Interacts with STMN2.

It localises to the cytoplasm. The protein resides in the cytoskeleton. In terms of biological role, activator of KIF1B plus-end-directed microtubule motor activity. Required for organization of axonal microtubules, and axonal outgrowth and maintenance during peripheral and central nervous system development. This chain is KIF-binding protein (KIFBP), found in Bos taurus (Bovine).